A 575-amino-acid chain; its full sequence is Sulfite reductase [NADPH] hemoprotein beta-component (575 aa).

Positions 438, 444, 484, and 488 each coordinate [4Fe-4S] cluster. Cys488 contacts siroheme.

The protein belongs to the nitrite and sulfite reductase 4Fe-4S domain family. In terms of assembly, alpha(8)-beta(8). The alpha component is a flavoprotein, the beta component is a hemoprotein. Siroheme serves as cofactor. [4Fe-4S] cluster is required as a cofactor.

The enzyme catalyses hydrogen sulfide + 3 NADP(+) + 3 H2O = sulfite + 3 NADPH + 4 H(+). Its pathway is sulfur metabolism; hydrogen sulfide biosynthesis; hydrogen sulfide from sulfite (NADPH route): step 1/1. In terms of biological role, component of the sulfite reductase complex that catalyzes the 6-electron reduction of sulfite to sulfide. This is one of several activities required for the biosynthesis of L-cysteine from sulfate. The chain is Sulfite reductase [NADPH] hemoprotein beta-component from Vibrio atlanticus (strain LGP32) (Vibrio splendidus (strain Mel32)).